Consider the following 404-residue polypeptide: Cysteine desulfurase IscS (404 aa).

Residues 75–76 (AT), Asn155, Gln183, and 203–205 (SAH) contribute to the pyridoxal 5'-phosphate site. Lys206 carries the N6-(pyridoxal phosphate)lysine modification. Thr243 contacts pyridoxal 5'-phosphate. Residue Cys328 is the Cysteine persulfide intermediate of the active site. Position 328 (Cys328) interacts with [2Fe-2S] cluster.

Belongs to the class-V pyridoxal-phosphate-dependent aminotransferase family. NifS/IscS subfamily. In terms of assembly, homodimer. Forms a heterotetramer with IscU, interacts with other sulfur acceptors. Pyridoxal 5'-phosphate serves as cofactor.

The protein resides in the cytoplasm. The catalysed reaction is (sulfur carrier)-H + L-cysteine = (sulfur carrier)-SH + L-alanine. The protein operates within cofactor biosynthesis; iron-sulfur cluster biosynthesis. Its function is as follows. Master enzyme that delivers sulfur to a number of partners involved in Fe-S cluster assembly, tRNA modification or cofactor biosynthesis. Catalyzes the removal of elemental sulfur atoms from cysteine to produce alanine. Functions as a sulfur delivery protein for Fe-S cluster synthesis onto IscU, an Fe-S scaffold assembly protein, as well as other S acceptor proteins. The polypeptide is Cysteine desulfurase IscS (Pseudomonas fluorescens (strain ATCC BAA-477 / NRRL B-23932 / Pf-5)).